The following is a 467-amino-acid chain: Palmitoyltransferase ZDHHC18-A (467 aa).

Over 1-59 (MKNCEYQQIDPRALRTPSSRTSSTLPCGRKGSQRLRRKWEVFPGKNRFYCDGRIMLARQ) the chain is Cytoplasmic. A helical membrane pass occupies residues 60-80 (CGVLPLTIGLIFITSVLFFTF). Residues 81 to 88 (DCPFLVDH) are Lumenal-facing. The chain crosses the membrane as a helical span at residues 89 to 109 (LTVFIPVIGGVLFIFVVISLL). Topologically, residues 110 to 204 (QTSFTDPGIL…GNCVGKRNYR (95 aa)) are cytoplasmic. The DHHC domain maps to 161–211 (KYCFTCKMFRPPRTSHCSLCDNCVERFDHHCPWVGNCVGKRNYRFFYAFIV). Catalysis depends on cysteine 191, which acts as the S-palmitoyl cysteine intermediate. The chain crosses the membrane as a helical span at residues 205–225 (FFYAFIVSLSFLTSFIFGCVI). Residues 226–247 (THLTLRSQGGNGFIQAIQDSPA) lie on the Lumenal side of the membrane. Residues 248–268 (SVVELVICFFSIWSILGLSGF) form a helical membrane-spanning segment. The Cytoplasmic portion of the chain corresponds to 269-467 (HTYLVASNLT…APDMGFIPLN (199 aa)).

It belongs to the DHHC palmitoyltransferase family. ERF2/ZDHHC9 subfamily.

It is found in the golgi apparatus membrane. The catalysed reaction is L-cysteinyl-[protein] + hexadecanoyl-CoA = S-hexadecanoyl-L-cysteinyl-[protein] + CoA. In terms of biological role, palmitoyltransferase that catalyzes the addition of palmitate onto various protein substrates, such as CGAS, HRAS and LCK. The protein is Palmitoyltransferase ZDHHC18-A of Danio rerio (Zebrafish).